The primary structure comprises 425 residues: Glucose-1-phosphate adenylyltransferase (425 aa).

Alpha-D-glucose 1-phosphate contacts are provided by residues tyrosine 110, glycine 175, 190-191, and serine 208; that span reads EK.

This sequence belongs to the bacterial/plant glucose-1-phosphate adenylyltransferase family. As to quaternary structure, homotetramer.

The enzyme catalyses alpha-D-glucose 1-phosphate + ATP + H(+) = ADP-alpha-D-glucose + diphosphate. The protein operates within glycan biosynthesis; glycogen biosynthesis. Functionally, involved in the biosynthesis of ADP-glucose, a building block required for the elongation reactions to produce glycogen. Catalyzes the reaction between ATP and alpha-D-glucose 1-phosphate (G1P) to produce pyrophosphate and ADP-Glc. This chain is Glucose-1-phosphate adenylyltransferase, found in Nitrosospira multiformis (strain ATCC 25196 / NCIMB 11849 / C 71).